The primary structure comprises 157 residues: Protein-export protein SecB (157 aa).

It belongs to the SecB family. Homotetramer, a dimer of dimers. One homotetramer interacts with 1 SecA dimer.

The protein resides in the cytoplasm. One of the proteins required for the normal export of preproteins out of the cell cytoplasm. It is a molecular chaperone that binds to a subset of precursor proteins, maintaining them in a translocation-competent state. It also specifically binds to its receptor SecA. The chain is Protein-export protein SecB from Tolumonas auensis (strain DSM 9187 / NBRC 110442 / TA 4).